The sequence spans 1086 residues: Transcription initiation factor TFIID subunit 2 (1086 aa).

Residues 1-11 show a composition bias toward polar residues; it reads MDFSEASTSGD. Disordered regions lie at residues 1-53 and 1064-1086; these read MDFS…PPPV and GYEAARRSPPRRDFGDETMNLMQ. 2 stretches are compositionally biased toward pro residues: residues 19-36 and 44-53; these read PFPPKPREGAPPPAPPLA and APPPLQPPPV. Over residues 1067–1078 the composition is skewed to basic and acidic residues; that stretch reads AARRSPPRRDFG.

Belongs to the TAF2 family. In terms of assembly, component of the TFIID basal transcription factor complex, composed of TATA-box-binding protein tbp-1, and a number of TBP-associated factors (TAFs).

Its subcellular location is the nucleus. Functionally, the TFIID basal transcription factor complex plays a major role in the initiation of RNA polymerase II (Pol II)-dependent transcription. TFIID recognizes and binds promoters via its subunit tbp-1, a TATA-box-binding protein, and promotes assembly of the pre-initiation complex (PIC). The TFIID complex consists of tbp-1 and TBP-associated factors (TAFs), including taf-2. May regulate RNA polymerase II activity and thereby may control transcription initiation by RNA polymerase II. This chain is Transcription initiation factor TFIID subunit 2, found in Caenorhabditis elegans.